The primary structure comprises 189 residues: Cytidylate kinase (189 aa).

Residue G7–S15 coordinates ATP.

The protein belongs to the cytidylate kinase family. Type 2 subfamily.

The protein resides in the cytoplasm. It catalyses the reaction CMP + ATP = CDP + ADP. The catalysed reaction is dCMP + ATP = dCDP + ADP. In Saccharolobus islandicus (strain L.S.2.15 / Lassen #1) (Sulfolobus islandicus), this protein is Cytidylate kinase.